The following is a 346-amino-acid chain: 3-dehydroquinate synthase (346 aa).

Residues 62-67, 96-100, 120-121, Lys-133, and Lys-142 contribute to the NAD(+) site; these read DGEQYK, GVISD, and TT. Glu-175, His-234, and His-251 together coordinate Zn(2+).

This sequence belongs to the sugar phosphate cyclases superfamily. Dehydroquinate synthase family. Co(2+) serves as cofactor. It depends on Zn(2+) as a cofactor. NAD(+) is required as a cofactor.

It localises to the cytoplasm. The enzyme catalyses 7-phospho-2-dehydro-3-deoxy-D-arabino-heptonate = 3-dehydroquinate + phosphate. Its pathway is metabolic intermediate biosynthesis; chorismate biosynthesis; chorismate from D-erythrose 4-phosphate and phosphoenolpyruvate: step 2/7. In terms of biological role, catalyzes the conversion of 3-deoxy-D-arabino-heptulosonate 7-phosphate (DAHP) to dehydroquinate (DHQ). The protein is 3-dehydroquinate synthase of Campylobacter fetus subsp. fetus (strain 82-40).